The sequence spans 449 residues: SWI/SNF chromatin-remodeling accessory subunit 2 (449 aa).

Over residues methionine 1 to methionine 11 the composition is skewed to polar residues. The interval methionine 1–lysine 56 is disordered. The region spanning asparagine 223–glutamine 300 is the SWIB/MDM2 domain.

The protein belongs to the SMARCD family. Component of the multiprotein chromatin-remodeling complexes SWI/SNF: SWI/SNF-A (BAF), SWI/SNF-B (PBAF) and related complexes. The canonical complex contains a catalytic subunit swsn-4, core subunits swsn-1 and swsn-5, and accessory subunits swsn-3, swsn-6, phf-10, dpff-1, swsn-9 and either ham-3/swsn-2.1 or swsn-2.2.

Its subcellular location is the nucleus. It is found in the nucleoplasm. It localises to the chromosome. The protein localises to the nucleus envelope. Functionally, involved in transcriptional activation and repression of select genes by chromatin remodeling (alteration of DNA-nucleosome topology). Component of SWI/SNF chromatin remodeling complexes that carry out key enzymatic activities, changing chromatin structure by altering DNA-histone contacts within a nucleosome in an ATP-dependent manner. Probably regulates vulva development through the let-60/Ras pathway. Involved in nuclear reassembly after mitosis and recruitment of nuclear envelope protein, mel-28, to the nuclear periphery in the early embryo and in the adult germline. Involved in gonadogenesis. This is SWI/SNF chromatin-remodeling accessory subunit 2 from Caenorhabditis elegans.